The sequence spans 187 residues: Elongation factor P (187 aa).

This sequence belongs to the elongation factor P family.

It is found in the cytoplasm. Its pathway is protein biosynthesis; polypeptide chain elongation. Its function is as follows. Involved in peptide bond synthesis. Stimulates efficient translation and peptide-bond synthesis on native or reconstituted 70S ribosomes in vitro. Probably functions indirectly by altering the affinity of the ribosome for aminoacyl-tRNA, thus increasing their reactivity as acceptors for peptidyl transferase. The chain is Elongation factor P from Mycolicibacterium smegmatis (strain ATCC 700084 / mc(2)155) (Mycobacterium smegmatis).